The following is an 86-amino-acid chain: Photosystem I reaction center subunit PsaK 1 (86 aa).

The next 2 membrane-spanning stretches (helical) occupy residues 14–34 (LSWS…AIAF) and 61–81 (AVLG…LGLA).

Belongs to the PsaG/PsaK family.

Its subcellular location is the cellular thylakoid membrane. In Synechocystis sp. (strain ATCC 27184 / PCC 6803 / Kazusa), this protein is Photosystem I reaction center subunit PsaK 1 (psaK1).